A 563-amino-acid polypeptide reads, in one-letter code: Methylcrotonoyl-CoA carboxylase beta chain, mitochondrial (563 aa).

The transit peptide at 1-22 directs the protein to the mitochondrion; the sequence is MWGALRSALRPCCRAAVPPQRA. The CoA carboxyltransferase N-terminal domain maps to 49–306; that stretch reads MKALVSQLHE…QKKMDVTIEP (258 aa). The segment at 49–555 is carboxyltransferase; sequence MKALVSQLHE…SAALNAPIQR (507 aa). At Lys70 the chain carries N6-acetyllysine; alternate. An N6-succinyllysine; alternate modification is found at Lys70. Lys141 carries the post-translational modification N6-succinyllysine. One can recognise a CoA carboxyltransferase C-terminal domain in the interval 309–555; it reads EPLFPADELY…SAALNAPIQR (247 aa). An acyl-CoA binding region spans residues 343–372; the sequence is RFNEFKALYGDTLVTGFARIFGYPVGIIGN. Lys433 carries the post-translational modification N6-succinyllysine. Position 495 is an N6-acetyllysine; alternate (Lys495). Residue Lys495 is modified to N6-succinyllysine; alternate. Position 511 is an N6-acetyllysine (Lys511).

It belongs to the AccD/PCCB family. In terms of assembly, probably a dodecamer composed of six biotin-containing alpha subunits (MCCC1) and six beta (MCCC2) subunits.

It localises to the mitochondrion matrix. It catalyses the reaction 3-methylbut-2-enoyl-CoA + hydrogencarbonate + ATP = 3-methyl-(2E)-glutaconyl-CoA + ADP + phosphate + H(+). It functions in the pathway amino-acid degradation; L-leucine degradation; (S)-3-hydroxy-3-methylglutaryl-CoA from 3-isovaleryl-CoA: step 2/3. In terms of biological role, carboxyltransferase subunit of the 3-methylcrotonyl-CoA carboxylase, an enzyme that catalyzes the conversion of 3-methylcrotonyl-CoA to 3-methylglutaconyl-CoA, a critical step for leucine and isovaleric acid catabolism. The protein is Methylcrotonoyl-CoA carboxylase beta chain, mitochondrial (Mccc2) of Mus musculus (Mouse).